The chain runs to 286 residues: Merozoite surface protein 2 (286 aa).

An N-terminal signal peptide occupies residues 1–20; the sequence is MKVIKTLSIINFFIFVTFNI. Asn-22 and Asn-36 each carry an N-linked (GlcNAc...) asparagine glycan. Residues 43–248 form a disordered region; the sequence is MTESKTPTPT…SQKECTDGNK (206 aa). The segment at 44–212 is polymorphic region; sequence TESKTPTPTG…EQTESPELQS (169 aa). Residues 54–68 are compositionally biased toward gly residues; it reads AGAGASGSAGSGDGA. Repeat unit 1 spans residues 59-68; it reads SGSAGSGDGA. The interval 59–106 is 5 X 10 AA tandem repeats of S-G-S-A-[GS]-[GS]-[AD]-G-A; the sequence is SGSAGSGDGASGSASGSASGSASGSAGASGSASGSAGASGSASGSAGA. A 2; partial repeat occupies 69 to 76; the sequence is SGSASGSA. The segment covering 69 to 137 has biased composition (low complexity); sequence SGSASGSASG…STSTSSENPN (69 aa). 3 consecutive repeat copies span residues 77–86, 88–96, and 97–106. 2 stretches are compositionally biased toward polar residues: residues 153–179 and 186–214; these read KPNQANKETQNNSNVQQDSQTKSNVPP and KSPTAQPEQAENSAPTAEQTESPELQSAP. An N-linked (GlcNAc...) asparagine glycan is attached at Asn-163. The N-linked (GlcNAc...) asparagine glycan is linked to Asn-235. Residues 239–248 show a composition bias toward basic and acidic residues; it reads SQKECTDGNK. Cys-243 and Cys-251 are joined by a disulfide. N-linked (GlcNAc...) asparagine glycans are attached at residues Asn-259 and Asn-260. A lipid anchor (GPI-anchor amidated asparagine) is attached at Asn-260. The propeptide at 261–286 is removed in mature form; it reads SSNIASINKFVVLISATLVLSFAIFI.

It localises to the cell membrane. Functionally, may play a role in the merozoite attachment to the erythrocyte. The sequence is that of Merozoite surface protein 2 from Plasmodium falciparum (isolate 311).